Reading from the N-terminus, the 429-residue chain is Tol-Pal system protein TolB (429 aa).

Positions 1-21 (MKPVFKMLLSLLILWTSLLHA) are cleaved as a signal peptide.

The protein belongs to the TolB family. In terms of assembly, the Tol-Pal system is composed of five core proteins: the inner membrane proteins TolA, TolQ and TolR, the periplasmic protein TolB and the outer membrane protein Pal. They form a network linking the inner and outer membranes and the peptidoglycan layer.

It is found in the periplasm. Its function is as follows. Part of the Tol-Pal system, which plays a role in outer membrane invagination during cell division and is important for maintaining outer membrane integrity. TolB occupies a key intermediary position in the Tol-Pal system because it communicates directly with both membrane-embedded components, Pal in the outer membrane and TolA in the inner membrane. This Hamiltonella defensa subsp. Acyrthosiphon pisum (strain 5AT) protein is Tol-Pal system protein TolB.